A 145-amino-acid polypeptide reads, in one-letter code: D-aminoacyl-tRNA deacylase (145 aa).

Positions 137-138 (GP) match the Gly-cisPro motif, important for rejection of L-amino acids motif.

The protein belongs to the DTD family. Homodimer.

The protein localises to the cytoplasm. The catalysed reaction is glycyl-tRNA(Ala) + H2O = tRNA(Ala) + glycine + H(+). It carries out the reaction a D-aminoacyl-tRNA + H2O = a tRNA + a D-alpha-amino acid + H(+). An aminoacyl-tRNA editing enzyme that deacylates mischarged D-aminoacyl-tRNAs. Also deacylates mischarged glycyl-tRNA(Ala), protecting cells against glycine mischarging by AlaRS. Acts via tRNA-based rather than protein-based catalysis; rejects L-amino acids rather than detecting D-amino acids in the active site. By recycling D-aminoacyl-tRNA to D-amino acids and free tRNA molecules, this enzyme counteracts the toxicity associated with the formation of D-aminoacyl-tRNA entities in vivo and helps enforce protein L-homochirality. This Saccharophagus degradans (strain 2-40 / ATCC 43961 / DSM 17024) protein is D-aminoacyl-tRNA deacylase.